Here is a 132-residue protein sequence, read N- to C-terminus: Fatty acid-binding protein 9 (132 aa).

Residues Ser13, Ser14, Ser40, Ser42, Ser44, and Ser91 each carry the phosphoserine modification.

It belongs to the calycin superfamily. Fatty-acid binding protein (FABP) family. In terms of tissue distribution, testis.

The protein resides in the cytoplasm. In Mus musculus (Mouse), this protein is Fatty acid-binding protein 9 (Fabp9).